The primary structure comprises 139 residues: Large ribosomal subunit protein uL16 (139 aa).

It belongs to the universal ribosomal protein uL16 family. In terms of assembly, part of the 50S ribosomal subunit.

Functionally, binds 23S rRNA and is also seen to make contacts with the A and possibly P site tRNAs. In Crocosphaera subtropica (strain ATCC 51142 / BH68) (Cyanothece sp. (strain ATCC 51142)), this protein is Large ribosomal subunit protein uL16.